We begin with the raw amino-acid sequence, 226 residues long: Chalcone--flavanone isomerase (226 aa).

Substrate contacts are provided by Thr-47, Asn-112, and Ser-189.

It belongs to the chalcone isomerase family.

The enzyme catalyses a chalcone = a flavanone.. The protein operates within secondary metabolite biosynthesis; flavonoid biosynthesis. Catalyzes the intramolecular cyclization of bicyclic chalcones into tricyclic (S)-flavanones. Responsible for the isomerization of 4,2',4',6'-tetrahydroxychalcone (also termed chalcone) into naringenin. The chain is Chalcone--flavanone isomerase (CHI) from Allium cepa (Onion).